The primary structure comprises 813 residues: Tax1-binding protein 1 homolog (813 aa).

Residues Ser124, Ser138, and Ser225 each carry the phosphoserine modification. Residues 144-627 (TTKAGLLELK…LENQAERKME (484 aa)) adopt a coiled-coil conformation. The interval 320-420 (EEIGRLQLCL…ELKLNAMKKD (101 aa)) is oligomerization. Polar residues predominate over residues 489–502 (DASVNTDPATSAST). Residues 489 to 508 (DASVNTDPATSASTVDVKPS) are disordered. Phosphoserine occurs at positions 617, 633, and 690. Residues 663-738 (YASQETRDGA…DPPSQHLRGH (76 aa)) are disordered. 2 consecutive UBZ1-type zinc fingers follow at residues 751–777 (HKKCPLCELMFPPNYDQSKFEEHVESH) and 778–804 (WKVCPMCSEQFPPDYDQQVFERHVQTH). Zn(2+) is bound by residues Cys754, Cys757, His773, His777, Cys781, Cys784, His800, and His804.

As to quaternary structure, homooligomer. Interacts with TNFAIP3. Interacts with STARD13. Interacts with MYO6. Interacts with TOM1; the interaction is indirect and is mediated by MYO6, which acts as a bridge between TOM1 and TAX1BP1. Interacts with MAVS; this interaction induces MAVS polyubiquitination. Interacts with TNIP1. Interacts with TRAF6; this interaction mediates deubiquitination of TRAF6 and inhibition of NF-kappa-B activation. Interacts with RIPK1; this interaction negatively regulates RIPK1 ubiquitination. Interacts with NBR1. Interacts with TBK1. Interacts with RB1CC1. Interacts with SQSTM1. Interacts with AZI2.

The protein localises to the cytoplasm. It localises to the mitochondrion. Its subcellular location is the preautophagosomal structure. The protein resides in the cytoplasmic vesicle. It is found in the autophagosome. Functionally, ubiquitin-binding adapter that participates in inflammatory, antiviral and innate immune processes as well as selective autophagy regulation. Plays a key role in the negative regulation of NF-kappa-B and IRF3 signalings by acting as an adapter for the ubiquitin-editing enzyme A20/TNFAIP3 to bind and inactivate its substrates. Disrupts the interactions between the E3 ubiquitin ligase TRAF3 and TBK1/IKBKE to attenuate 'Lys63'-linked polyubiquitination of TBK1 and thereby IFN-beta production. Also recruits A20/TNFAIP3 to ubiquitinated signaling proteins TRAF6 and RIPK1, leading to their deubiquitination and disruption of IL-1 and TNF-induced NF-kappa-B signaling pathways. Inhibits virus-induced apoptosis by inducing the 'Lys-48'-linked polyubiquitination and degradation of MAVS via recruitment of the E3 ligase ITCH, thereby attenuating MAVS-mediated apoptosis signaling. As a macroautophagy/autophagy receptor, facilitates the xenophagic clearance of pathogenic bacteria such as Salmonella typhimurium and Mycobacterium tuberculosis. Upon NBR1 recruitment to the SQSTM1-ubiquitin condensates, acts as the major recruiter of RB1CC1 to these ubiquitin condensates to promote their autophagic degradation. The chain is Tax1-binding protein 1 homolog (TAX1BP1) from Pongo abelii (Sumatran orangutan).